A 104-amino-acid chain; its full sequence is Large ribosomal subunit protein cL38 (104 aa).

The transit peptide at methionine 1–glutamate 39 directs the protein to the chloroplast. The segment at serine 42–proline 76 is disordered. A compositionally biased stretch (basic residues) spans proline 44–serine 60.

Belongs to the chloroplast-specific ribosomal protein cL38 family. Part of the 50S ribosomal subunit.

Its subcellular location is the plastid. It is found in the chloroplast. This chain is Large ribosomal subunit protein cL38 (PSRP6), found in Pisum sativum (Garden pea).